The chain runs to 207 residues: Tetrathionate reductase subunit B (207 aa).

The signal sequence occupies residues 1-28 (MLISKTLIFYQVVNIVSQKGSGKRRWKM). 4Fe-4S ferredoxin-type domains follow at residues 34-63 (YVYVVDVSKCYGCLSCVAACAAENNVPVGY), 75-106 (GRVAFVPKICNHCDNPSCVHACPVNATYKTEE), and 107-136 (GLVLIDDEICIGCGACIQACPYGARFRNPV). Positions 43, 46, 49, 53, 84, 87, 92, 96, 116, 119, 122, 126, 143, 146, 157, and 161 each coordinate [4Fe-4S] cluster.

In terms of assembly, probably composed of three subunits: TtrA, TtrB and TtrC.

Its subcellular location is the cell membrane. Its function is as follows. Part of a membrane-bound tetrathionate reductase that catalyzes the reduction of tetrathionate to thiosulfate. TtrB is probably involved in transfer of electrons from TtrC to TtrA. The protein is Tetrathionate reductase subunit B (ttrB) of Archaeoglobus fulgidus (strain ATCC 49558 / DSM 4304 / JCM 9628 / NBRC 100126 / VC-16).